Here is a 163-residue protein sequence, read N- to C-terminus: Large ribosomal subunit protein uL10 (163 aa).

This sequence belongs to the universal ribosomal protein uL10 family. In terms of assembly, part of the ribosomal stalk of the 50S ribosomal subunit. The N-terminus interacts with L11 and the large rRNA to form the base of the stalk. The C-terminus forms an elongated spine to which L12 dimers bind in a sequential fashion forming a multimeric L10(L12)X complex.

Functionally, forms part of the ribosomal stalk, playing a central role in the interaction of the ribosome with GTP-bound translation factors. The polypeptide is Large ribosomal subunit protein uL10 (Haemophilus influenzae (strain 86-028NP)).